Here is a 642-residue protein sequence, read N- to C-terminus: Threonine--tRNA ligase (642 aa).

The region spanning 1–61 is the TGS domain; the sequence is MPIITLPDGS…EQDSQLAIIT (61 aa). The catalytic stretch occupies residues 243-534; that stretch reads DHRKIGKQLD…LTEEYAGFFP (292 aa). The Zn(2+) site is built by C334, H385, and H511.

Belongs to the class-II aminoacyl-tRNA synthetase family. Homodimer. It depends on Zn(2+) as a cofactor.

Its subcellular location is the cytoplasm. It carries out the reaction tRNA(Thr) + L-threonine + ATP = L-threonyl-tRNA(Thr) + AMP + diphosphate + H(+). Catalyzes the attachment of threonine to tRNA(Thr) in a two-step reaction: L-threonine is first activated by ATP to form Thr-AMP and then transferred to the acceptor end of tRNA(Thr). Also edits incorrectly charged L-seryl-tRNA(Thr). This Proteus mirabilis (strain HI4320) protein is Threonine--tRNA ligase.